A 527-amino-acid polypeptide reads, in one-letter code: Glucose transporter 1B/1C/1D/1F/2B (527 aa).

Residues 1–22 form a disordered region; that stretch reads MTERRDNVSHAPDAIEGPNDGA. Topologically, residues 1–43 are cytoplasmic; sequence MTERRDNVSHAPDAIEGPNDGAHAEDTSPGFFSLENLGVAQVQ. A helical transmembrane segment spans residues 44 to 64; that stretch reads VVGGTLNGYVIGYVAVYLLLY. The Extracellular portion of the chain corresponds to 65-118; the sequence is LTATECKFTTEGACGGRKIYGCKWSGTTCKFENPKCSEGSDPSDSCKNEVAYTS. The chain crosses the membrane as a helical span at residues 119 to 139; sequence VYSGIFACAMIVGSMVGSIIA. Residues 140 to 151 are Cytoplasmic-facing; sequence GKCITTFGLKKS. Residues 152–172 form a helical membrane-spanning segment; that stretch reads FIIVSITCTIACVVVQVAIEY. The Extracellular portion of the chain corresponds to 173–175; the sequence is NNY. A helical transmembrane segment spans residues 176-196; sequence YALCTGRVLIGLGVGILCSVF. At 197-213 the chain is on the cytoplasmic side; the sequence is PMYVNENAHPKLCKMDG. The helical transmembrane segment at 214–234 threads the bilayer; the sequence is VLFQVFTTLGIMLAAMLGLIL. The Extracellular segment spans residues 235–249; sequence DKTGASKEEANMAGR. Residues 250–270 form a helical membrane-spanning segment; the sequence is LHVFSAVPLGLSVAMFLVGMF. Topologically, residues 271-299 are cytoplasmic; that stretch reads LRESTATFAQDDDGKADGGMDPNEYGWGQ. Residues 300–320 traverse the membrane as a helical segment; sequence MLWPLFMGAVTAGTLQLTGIN. At 321 to 338 the chain is on the extracellular side; sequence AVMNYAPKITENLGMDPS. The chain crosses the membrane as a helical span at residues 339-359; the sequence is LGNFLVMAWNFVTSLVAIPLA. At 360–372 the chain is on the cytoplasmic side; the sequence is SRFTMRQMFITCS. A helical membrane pass occupies residues 373 to 393; it reads FVASCMCLFLCGIPVFPGVAG. Over 394-403 the chain is Extracellular; that stretch reads KEVKNGVATT. Residues 404 to 424 form a helical membrane-spanning segment; sequence GIALFIAAFEFGVGSCFFVLA. Residues 425-436 lie on the Cytoplasmic side of the membrane; that stretch reads QDLFPPSFRPKG. The helical transmembrane segment at 437 to 457 threads the bilayer; it reads GSFVVMMQFIFNILINLLYPI. The Extracellular segment spans residues 458 to 475; sequence TTEAISGGATGNQDKGQA. A helical membrane pass occupies residues 476–496; it reads VAFILFGLIGLICSVLQFFYL. Topologically, residues 497–527 are cytoplasmic; sequence YPYDANQDHENDHGGEPVEQKTYPVEASPRN. Residues 506–515 are compositionally biased toward basic and acidic residues; that stretch reads ENDHGGEPVE. The interval 506–527 is disordered; sequence ENDHGGEPVEQKTYPVEASPRN.

The protein belongs to the major facilitator superfamily. Sugar transporter (TC 2.A.1.1) family.

The protein resides in the membrane. Its function is as follows. Facilitative glucose transporter. The protein is Glucose transporter 1B/1C/1D/1F/2B (THT1B) of Trypanosoma brucei brucei.